We begin with the raw amino-acid sequence, 471 residues long: Glutamate--tRNA ligase (471 aa).

The 'HIGH' region motif lies at 9–19 (PSPTGYLHVGG). Zn(2+) contacts are provided by Cys-98, Cys-100, Cys-125, and His-127. Positions 237 to 241 (KLSKR) match the 'KMSKS' region motif. Lys-240 serves as a coordination point for ATP.

The protein belongs to the class-I aminoacyl-tRNA synthetase family. Glutamate--tRNA ligase type 1 subfamily. In terms of assembly, monomer. Requires Zn(2+) as cofactor.

The protein localises to the cytoplasm. It carries out the reaction tRNA(Glu) + L-glutamate + ATP = L-glutamyl-tRNA(Glu) + AMP + diphosphate. Its function is as follows. Catalyzes the attachment of glutamate to tRNA(Glu) in a two-step reaction: glutamate is first activated by ATP to form Glu-AMP and then transferred to the acceptor end of tRNA(Glu). This is Glutamate--tRNA ligase from Citrobacter koseri (strain ATCC BAA-895 / CDC 4225-83 / SGSC4696).